The chain runs to 178 residues: Large ribosomal subunit protein uL6 (178 aa).

The protein belongs to the universal ribosomal protein uL6 family. In terms of assembly, part of the 50S ribosomal subunit.

Functionally, this protein binds to the 23S rRNA, and is important in its secondary structure. It is located near the subunit interface in the base of the L7/L12 stalk, and near the tRNA binding site of the peptidyltransferase center. The protein is Large ribosomal subunit protein uL6 of Helicobacter hepaticus (strain ATCC 51449 / 3B1).